A 397-amino-acid polypeptide reads, in one-letter code: Ubiquitin-like modifier-activating enzyme 5 (397 aa).

Glycine 77, aspartate 98, lysine 121, asparagine 144, and asparagine 178 together coordinate ATP. 2 residues coordinate Zn(2+): cysteine 220 and cysteine 223. Cysteine 244 acts as the Glycyl thioester intermediate in catalysis. 2 residues coordinate Zn(2+): cysteine 297 and cysteine 302.

This sequence belongs to the ubiquitin-activating E1 family. UBA5 subfamily.

Its function is as follows. E1-like enzyme which activates UFM1. The chain is Ubiquitin-like modifier-activating enzyme 5 from Culex quinquefasciatus (Southern house mosquito).